The sequence spans 389 residues: Probable tRNA sulfurtransferase (389 aa).

The THUMP domain occupies aspartate 57–valine 165. Residues leucine 183–leucine 184, lysine 267, glycine 289, and glutamine 298 each bind ATP.

It belongs to the ThiI family.

It is found in the cytoplasm. It catalyses the reaction [ThiI sulfur-carrier protein]-S-sulfanyl-L-cysteine + a uridine in tRNA + 2 reduced [2Fe-2S]-[ferredoxin] + ATP + H(+) = [ThiI sulfur-carrier protein]-L-cysteine + a 4-thiouridine in tRNA + 2 oxidized [2Fe-2S]-[ferredoxin] + AMP + diphosphate. It carries out the reaction [ThiS sulfur-carrier protein]-C-terminal Gly-Gly-AMP + S-sulfanyl-L-cysteinyl-[cysteine desulfurase] + AH2 = [ThiS sulfur-carrier protein]-C-terminal-Gly-aminoethanethioate + L-cysteinyl-[cysteine desulfurase] + A + AMP + 2 H(+). It functions in the pathway cofactor biosynthesis; thiamine diphosphate biosynthesis. Catalyzes the ATP-dependent transfer of a sulfur to tRNA to produce 4-thiouridine in position 8 of tRNAs, which functions as a near-UV photosensor. Also catalyzes the transfer of sulfur to the sulfur carrier protein ThiS, forming ThiS-thiocarboxylate. This is a step in the synthesis of thiazole, in the thiamine biosynthesis pathway. The sulfur is donated as persulfide by IscS. This is Probable tRNA sulfurtransferase from Methanothermobacter thermautotrophicus (strain ATCC 29096 / DSM 1053 / JCM 10044 / NBRC 100330 / Delta H) (Methanobacterium thermoautotrophicum).